The sequence spans 236 residues: Syntaxin-8 (236 aa).

Residues M1–G215 are Cytoplasmic-facing. Residues L42–A65 are a coiled coil. Phosphoserine is present on residues S102 and S160. Positions Q145–V207 constitute a t-SNARE coiled-coil homology domain. The chain crosses the membrane as a helical; Anchor for type IV membrane protein span at residues M216 to V232. Residues W233 to N236 are Vesicular-facing.

Belongs to the syntaxin family. In terms of assembly, part of the SNARE core complex containing STX7, VAMP8 and VTI1B. Interacts with VAMP8. Forms a SNARE complex with STX7, VTI1B and VAMP8 which functions in the homotypic fusion of late endosomes. Component of the SNARE complex composed of STX7, STX8, VAMP7 and VTI1B that is required for heterotypic fusion of late endosomes with lysosomes. Interacts with HECTD3. Interacts with TPC1. In terms of processing, ubiquitinated by HECTD3. Widely expressed in all tissues examined.

The protein localises to the membrane. In terms of biological role, vesicle trafficking protein that functions in the early secretory pathway, possibly by mediating retrograde transport from cis-Golgi membranes to the ER. The chain is Syntaxin-8 (Stx8) from Rattus norvegicus (Rat).